Here is a 67-residue protein sequence, read N- to C-terminus: MDNNTKLQKLYEQLAATGSEKELDAMLDENMAGAGSPLTVTITGLIVAATTGFDWCPTGACTYSCRV.

Residues 1-34 (MDNNTKLQKLYEQLAATGSEKELDAMLDENMAGA) constitute a propeptide, cleaved by FlvT. A 2,3-didehydroalanine (Ser); by FlvM2 modification is found at Ser-36. 2 positions are modified to 2,3-didehydrobutyrine; by FlvM2: Thr-39 and Thr-43. Cross-links (beta-methyllanthionine (Thr-Cys); by FlvM2) lie at residues 50–56 (TTGFDWC), 58–61 (TGAC), and 62–65 (TYSC).

Contains DL-beta-methyllanthionine, when coepressed in E.coli with the flavecin synthetase FlvM2.

It localises to the secreted. In terms of biological role, lanthionine-containing peptide antibiotic (lantibiotic) only active on Gram-positive bacteria in synergy with Flvalpha.a. Is not active in absence of Flvalpha.a, which is encoded by the same operon than Flvbeta.b. The bactericidal activity of lantibiotics is based on depolarization of energized bacterial cytoplasmic membranes, initiated by the formation of aqueous transmembrane pores. The protein is Lantibiotic Flvbeta.b of Ruminococcus flavefaciens.